We begin with the raw amino-acid sequence, 506 residues long: Histidine ammonia-lyase (506 aa).

Residues 143 to 145 (ASG) constitute a cross-link (5-imidazolinone (Ala-Gly)). Ser144 is modified (2,3-didehydroalanine (Ser)).

It belongs to the PAL/histidase family. Post-translationally, contains an active site 4-methylidene-imidazol-5-one (MIO), which is formed autocatalytically by cyclization and dehydration of residues Ala-Ser-Gly.

The protein resides in the cytoplasm. It catalyses the reaction L-histidine = trans-urocanate + NH4(+). The protein operates within amino-acid degradation; L-histidine degradation into L-glutamate; N-formimidoyl-L-glutamate from L-histidine: step 1/3. The polypeptide is Histidine ammonia-lyase (Salmonella paratyphi A (strain ATCC 9150 / SARB42)).